Consider the following 173-residue polypeptide: UPF0316 protein Amet_0954 (173 aa).

The next 3 helical transmembrane spans lie at 3 to 23 (LVLG…MGTV), 38 to 58 (AIGF…LEAL), and 61 to 81 (PVNI…GIYI).

Belongs to the UPF0316 family.

It is found in the cell membrane. The protein is UPF0316 protein Amet_0954 of Alkaliphilus metalliredigens (strain QYMF).